A 329-amino-acid polypeptide reads, in one-letter code: Ribosomal protein L11 methyltransferase (329 aa).

Residues threonine 177, glycine 198, aspartate 220, and asparagine 264 each contribute to the S-adenosyl-L-methionine site.

It belongs to the methyltransferase superfamily. PrmA family.

It localises to the cytoplasm. It carries out the reaction L-lysyl-[protein] + 3 S-adenosyl-L-methionine = N(6),N(6),N(6)-trimethyl-L-lysyl-[protein] + 3 S-adenosyl-L-homocysteine + 3 H(+). Functionally, methylates ribosomal protein L11. The polypeptide is Ribosomal protein L11 methyltransferase (Helicobacter pylori (strain J99 / ATCC 700824) (Campylobacter pylori J99)).